The following is a 212-amino-acid chain: Thymidylate kinase (212 aa).

11 to 18 is an ATP binding site; that stretch reads GLEGAGKT.

This sequence belongs to the thymidylate kinase family.

It catalyses the reaction dTMP + ATP = dTDP + ADP. Its function is as follows. Phosphorylation of dTMP to form dTDP in both de novo and salvage pathways of dTTP synthesis. This Buchnera aphidicola subsp. Schizaphis graminum (strain Sg) protein is Thymidylate kinase.